The following is a 650-amino-acid chain: DNA gyrase subunit B (650 aa).

One can recognise a Toprim domain in the interval 429–543 (NELFIVEGDS…AGYVYIAQPP (115 aa)). Residues glutamate 435, aspartate 508, and aspartate 510 each coordinate Mg(2+).

Belongs to the type II topoisomerase GyrB family. Heterotetramer, composed of two GyrA and two GyrB chains. In the heterotetramer, GyrA contains the active site tyrosine that forms a transient covalent intermediate with DNA, while GyrB binds cofactors and catalyzes ATP hydrolysis. Mg(2+) serves as cofactor. The cofactor is Mn(2+). Requires Ca(2+) as cofactor.

The protein localises to the cytoplasm. The enzyme catalyses ATP-dependent breakage, passage and rejoining of double-stranded DNA.. A type II topoisomerase that negatively supercoils closed circular double-stranded (ds) DNA in an ATP-dependent manner to modulate DNA topology and maintain chromosomes in an underwound state. Negative supercoiling favors strand separation, and DNA replication, transcription, recombination and repair, all of which involve strand separation. Also able to catalyze the interconversion of other topological isomers of dsDNA rings, including catenanes and knotted rings. Type II topoisomerases break and join 2 DNA strands simultaneously in an ATP-dependent manner. This chain is DNA gyrase subunit B, found in Streptococcus pyogenes serotype M1.